A 356-amino-acid polypeptide reads, in one-letter code: MTPSLTVLGIESSCDDTAAAVLRGPEVLSSVVYGQTALHAAFGGVVPELAARAHVEKLDIAVAAALSEAVLALDQIDVIAVTAGPGLIGGVLSGVMLAKGLSAASGVPLIGVNHLAGHALTPRFTDGLAFPYLMLLVSGGHCQFLRVEGPEAFHRLGGTIDDAPGEAFDKTAKLLGLPQPGGPAVEAEARAGDPARFVFPRPLLDRAGCDMSFSGLKTALLRARDGLVSAGGGLTAQDRADLCAGFQAAICDVLVEKSRRALTQSEGVTGFAVAGGVAANEQVRSGLARLAAELDAPFVAPPLRYCTDNAAMIAWAGQEAFSAGARSGLDLSARPRWPLDNSQPALLGSGKKGAKA.

The Fe cation site is built by histidine 114 and histidine 118. Substrate contacts are provided by residues 136–140 (LVSGG), aspartate 169, glycine 182, and asparagine 280. Aspartate 308 is a binding site for Fe cation. The segment at 333 to 356 (ARPRWPLDNSQPALLGSGKKGAKA) is disordered.

It belongs to the KAE1 / TsaD family. Fe(2+) is required as a cofactor.

It localises to the cytoplasm. It catalyses the reaction L-threonylcarbamoyladenylate + adenosine(37) in tRNA = N(6)-L-threonylcarbamoyladenosine(37) in tRNA + AMP + H(+). In terms of biological role, required for the formation of a threonylcarbamoyl group on adenosine at position 37 (t(6)A37) in tRNAs that read codons beginning with adenine. Is involved in the transfer of the threonylcarbamoyl moiety of threonylcarbamoyl-AMP (TC-AMP) to the N6 group of A37, together with TsaE and TsaB. TsaD likely plays a direct catalytic role in this reaction. This Dinoroseobacter shibae (strain DSM 16493 / NCIMB 14021 / DFL 12) protein is tRNA N6-adenosine threonylcarbamoyltransferase.